The primary structure comprises 355 residues: Capsular polysaccharide biosynthesis glycosyltransferase CapH (355 aa).

Belongs to the glycosyltransferase group 1 family. Glycosyltransferase 4 subfamily.

It participates in capsule biogenesis; capsule polysaccharide biosynthesis. Functionally, required for the biosynthesis of type 1 capsular polysaccharide. In Staphylococcus aureus, this protein is Capsular polysaccharide biosynthesis glycosyltransferase CapH (capH).